We begin with the raw amino-acid sequence, 558 residues long: Glucose-6-phosphate isomerase (558 aa).

N-acetylalanine is present on A2. K12 is modified (N6-acetyllysine). An N6-(2-hydroxyisobutyryl)lysine modification is found at K34. S107 carries the phosphoserine modification. Position 109 is a phosphothreonine (T109). K142 bears the N6-acetyllysine mark. 159–160 (GS) contacts D-glucose 6-phosphate. A Phosphoserine; by CK2 modification is found at S185. Position 210–215 (210–215 (SKTFTT)) interacts with D-glucose 6-phosphate. The residue at position 250 (T250) is a Phosphothreonine. Residues Q354, E358, and H389 each coordinate D-glucose 6-phosphate. The Proton donor role is filled by E358. Residue H389 is part of the active site. Residue K454 is modified to N6-acetyllysine; alternate. N6-malonyllysine; alternate is present on K454. K454 carries the N6-succinyllysine; alternate modification. S455 is modified (phosphoserine). K519 contributes to the D-glucose 6-phosphate binding site. K519 is an active-site residue.

The protein belongs to the GPI family. As to quaternary structure, homodimer in the catalytically active form, monomer in the secreted form. Phosphorylation at Ser-185 by CK2 has been shown to decrease enzymatic activity and may contribute to secretion by a non-classical secretory pathway. In terms of processing, ISGylated.

It localises to the cytoplasm. Its subcellular location is the secreted. It catalyses the reaction alpha-D-glucose 6-phosphate = beta-D-fructose 6-phosphate. It functions in the pathway carbohydrate degradation; glycolysis; D-glyceraldehyde 3-phosphate and glycerone phosphate from D-glucose: step 2/4. Its function is as follows. In the cytoplasm, catalyzes the conversion of glucose-6-phosphate to fructose-6-phosphate, the second step in glycolysis, and the reverse reaction during gluconeogenesis. Besides it's role as a glycolytic enzyme, also acts as a secreted cytokine: acts as an angiogenic factor (AMF) that stimulates endothelial cell motility. Acts as a neurotrophic factor, neuroleukin, for spinal and sensory neurons. It is secreted by lectin-stimulated T-cells and induces immunoglobulin secretion. The protein is Glucose-6-phosphate isomerase of Sus scrofa (Pig).